The following is a 405-amino-acid chain: Replication factor C large subunit (405 aa).

ATP is bound at residue glycine 47–threonine 54.

It belongs to the activator 1 small subunits family. RfcL subfamily. In terms of assembly, heteromultimer composed of small subunits (RfcS) and large subunits (RfcL).

In terms of biological role, part of the RFC clamp loader complex which loads the PCNA sliding clamp onto DNA. The sequence is that of Replication factor C large subunit from Saccharolobus islandicus (strain Y.N.15.51 / Yellowstone #2) (Sulfolobus islandicus).